A 1556-amino-acid chain; its full sequence is Disco-interacting protein 2 homolog C (1556 aa).

Positions 7-120 constitute a DMAP1-binding domain; the sequence is EGMALPLEVR…PMPSKRRSLV (114 aa). 2 disordered regions span residues 47–157 and 170–189; these read YLPQ…SQGS and GSTT…SGAA. Over residues 81 to 93 the composition is skewed to basic and acidic residues; the sequence is GSRDERYRSDVHT. Polar residues-rich tracts occupy residues 120–136 and 144–157; these read VVQT…TSSG and QGDS…SQGS. The span at 170 to 183 shows a compositional bias: low complexity; it reads GSTTSTTSSSSTQS. A Phosphothreonine modification is found at Thr264.

The protein belongs to the DIP2 family.

The chain is Disco-interacting protein 2 homolog C (DIP2C) from Homo sapiens (Human).